The chain runs to 307 residues: Dioxygenase cdmD (307 aa).

Fe cation contacts are provided by H146, D148, and H226.

It belongs to the PhyH family. As to quaternary structure, homodimer. It depends on Fe cation as a cofactor.

It carries out the reaction verruculide A + 2-oxoglutarate + O2 = chrodrimanin T + succinate + CO2. The enzyme catalyses chrodrimanin E + 2-oxoglutarate + O2 = chrodrimanin A + succinate + CO2. Its pathway is secondary metabolite biosynthesis; terpenoid biosynthesis. Dioxygenase; part of the gene cluster that mediates the biosynthesis of chrodrimanin B, a meroterpenoid that acts as a potent blocker of insect GABA-gated chloride channels. The first step of the pathway is the biosynthesis of 6-hydroxymellein by the polyketide synthase cdmE. The prenyltransferase cdmH acts as a 6-hydroxymellein 5-farnesyltransferase and produces the hydrophobic metabolite verruculide C. The FAD-dependent monooxygenase cdmI further converts verruculide C into verruculide B. The terpene cyclase cdmG then produced the pentacyclic molecule 3-hydroxypentacecilide A, the backbone structure of chrodrimanin B, via folding the farnesyl moiety of the substrate into the chair-boat conformation. The short-chain dehydrogenase/reductase cdmF functions as the 3-OH dehydrogenase that oxidizes the C-3 hydroxyl group of 3-hydroxypentacecilide A and produces chrodrimanin C, the dehydrogenated product of 3-hydroxypentacecilide A. The cytochrome P450 monooxygenase cdmJ then accepts both 3-hydroxypentacecilide A and chrodrimanin C and functions as a C-7-beta-hydroxylase to produce respectively chrodrimanin H and chrodrimanin F. The dioxygenase cdmA accepts chrodrimanin H to afford chrodrimanin E, which is further transformed to chrodrimanin A by the dioxygenase cdmD. CdmA can also accept chrodrimanin C as substrate to convert it into verruculide A, which is further converted into chrodrimanin T by cdmD. The last step of the biosynthesis is proposed to be performed by the acetyltransferase cdmC which acetylates chrodrimanin A to yield chrodrimanin B. The pathway may also lead to the production of additional shunt products, including chrodrimanins T and U. The sequence is that of Dioxygenase cdmD from Talaromyces verruculosus (Penicillium verruculosum).